The chain runs to 370 residues: Histidinol-phosphate aminotransferase 3 (370 aa).

Lys229 carries the post-translational modification N6-(pyridoxal phosphate)lysine.

It belongs to the class-II pyridoxal-phosphate-dependent aminotransferase family. Histidinol-phosphate aminotransferase subfamily. Homodimer. Requires pyridoxal 5'-phosphate as cofactor.

It catalyses the reaction L-histidinol phosphate + 2-oxoglutarate = 3-(imidazol-4-yl)-2-oxopropyl phosphate + L-glutamate. It functions in the pathway amino-acid biosynthesis; L-histidine biosynthesis; L-histidine from 5-phospho-alpha-D-ribose 1-diphosphate: step 7/9. This chain is Histidinol-phosphate aminotransferase 3 (hisC3), found in Rhizobium meliloti (strain 1021) (Ensifer meliloti).